The primary structure comprises 197 residues: Dephospho-CoA kinase (197 aa).

The DPCK domain maps to 2–197; it reads IVGLTGGIAS…YQQILSLNAA (196 aa). 10 to 15 contributes to the ATP binding site; it reads ASGKTL.

Belongs to the CoaE family.

Its subcellular location is the cytoplasm. It carries out the reaction 3'-dephospho-CoA + ATP = ADP + CoA + H(+). The protein operates within cofactor biosynthesis; coenzyme A biosynthesis; CoA from (R)-pantothenate: step 5/5. Its function is as follows. Catalyzes the phosphorylation of the 3'-hydroxyl group of dephosphocoenzyme A to form coenzyme A. The protein is Dephospho-CoA kinase of Dichelobacter nodosus (Bacteroides nodosus).